The primary structure comprises 255 residues: 1-(5-phosphoribosyl)-5-[(5-phosphoribosylamino)methylideneamino] imidazole-4-carboxamide isomerase (255 aa).

Asp8 serves as the catalytic Proton acceptor. Asp129 functions as the Proton donor in the catalytic mechanism.

The protein belongs to the HisA/HisF family.

It localises to the cytoplasm. The enzyme catalyses 1-(5-phospho-beta-D-ribosyl)-5-[(5-phospho-beta-D-ribosylamino)methylideneamino]imidazole-4-carboxamide = 5-[(5-phospho-1-deoxy-D-ribulos-1-ylimino)methylamino]-1-(5-phospho-beta-D-ribosyl)imidazole-4-carboxamide. The protein operates within amino-acid biosynthesis; L-histidine biosynthesis; L-histidine from 5-phospho-alpha-D-ribose 1-diphosphate: step 4/9. The chain is 1-(5-phosphoribosyl)-5-[(5-phosphoribosylamino)methylideneamino] imidazole-4-carboxamide isomerase from Prochlorococcus marinus (strain MIT 9211).